Consider the following 331-residue polypeptide: Type II secretion system protein K (331 aa).

Residues 1-9 (MPSCRRQGG) constitute a propeptide, leader sequence. The chain crosses the membrane as a helical span at residues 8–27 (GGMALLVVLLILSVMVIIAS). The Periplasmic portion of the chain corresponds to 28–331 (NMSGRLQLEL…MLRRLNGGAE (304 aa)).

Belongs to the GSP K family. Type II secretion is composed of four main components: the outer membrane complex, the inner membrane complex, the cytoplasmic secretion ATPase and the periplasm-spanning pseudopilus. Interacts with core component ExeG. Post-translationally, cleaved by prepilin peptidase.

It localises to the cell inner membrane. Its function is as follows. Component of the type II secretion system required for the energy-dependent secretion of extracellular factors such as proteases and toxins from the periplasm. Plays a role in pseudopilus assembly and seems to control its length. Interacts with the pseudopilus tip complex that is critical for the recognition and binding of secretion substrates. The polypeptide is Type II secretion system protein K (exeK) (Aeromonas hydrophila).